We begin with the raw amino-acid sequence, 507 residues long: MISLFWADALVKDLSGPQRVSTGISPSGPIHVGNMREILTGDILFKAITKRGLESDFIYLCDDMDPLRKVYPFLSKDYERYVGQPLKNIPAPQGAGKYSDYYLEPFVRVMKEANIPARVIKTSDLYESGMLAQACDIAINNREKIKDILETVSGRKIEGDFYPYEPLCEKCGRISTTHVISYSYPYAEYACKCGHHGFADIRKAEGKMPWRVEWPAKWFALKVTVEPFGKDHGAPGGSYDTGRRIAREVFGIEPPVPLMYERIILKGKGAMHSSTGLAIAASEIMEVIPPDLLRYMIARVNPGRHIDFDPGMGILALSDELEKLQDAYFENRASLDEDQAAMVEYSLVNKDRKPYPVDFRHLVTLVQIYRTEDEILRAVKKGQPSDFIEADFRKEIEYARRWLERYAPESVKFRILPVDQKIELSDSDLAILSDFLNGIEDMPWNSESIHDRIYEISQKFKTNPESVFTLFYRVFIGKDRGPRLGYFLFNLGKDFVRERIRNVIRDH.

Residues 26–34 (PSGPIHVGN) carry the 'HIGH' region motif. Positions 270–274 (AMHSS) match the 'KMSKS' region motif.

Belongs to the class-I aminoacyl-tRNA synthetase family.

The protein localises to the cytoplasm. The enzyme catalyses tRNA(Lys) + L-lysine + ATP = L-lysyl-tRNA(Lys) + AMP + diphosphate. In Thermoplasma acidophilum (strain ATCC 25905 / DSM 1728 / JCM 9062 / NBRC 15155 / AMRC-C165), this protein is Lysine--tRNA ligase (lysS).